The primary structure comprises 304 residues: Small glutamine-rich tetratricopeptide repeat-containing protein beta (304 aa).

4 TPR repeats span residues 15–49 (LREQ…SPED), 85–118 (ADQL…DPNN), 119–152 (AVYY…DSKY), and 153–186 (SKAY…DPEN). Residue lysine 131 is modified to N6-acetyllysine. Phosphoserine is present on residues serine 293, serine 295, and serine 297.

It belongs to the SGT family. In terms of assembly, homooligomerize.

Co-chaperone that binds directly to HSC70 and HSP70 and regulates their ATPase activity. In Homo sapiens (Human), this protein is Small glutamine-rich tetratricopeptide repeat-containing protein beta (SGTB).